A 149-amino-acid polypeptide reads, in one-letter code: Transcriptional repressor NrdR (149 aa).

The segment at 3–34 (CPFCDTEETKVIDSRLVSDGYQVRRRRECGHC) is a zinc-finger region. Positions 49 to 139 (PKIIKTDGTR…VYLSFDDIDQ (91 aa)) constitute an ATP-cone domain.

The protein belongs to the NrdR family. Requires Zn(2+) as cofactor.

Its function is as follows. Negatively regulates transcription of bacterial ribonucleotide reductase nrd genes and operons by binding to NrdR-boxes. This Haemophilus influenzae (strain 86-028NP) protein is Transcriptional repressor NrdR.